We begin with the raw amino-acid sequence, 310 residues long: uncharacterized protein (310 aa).

Over 1 to 6 the chain is Cytoplasmic; sequence MISEKA. One can recognise a PQ-loop 1 domain in the interval 5-69; that stretch reads KAATALATIA…SKGNVILQVQ (65 aa). The helical transmembrane segment at 7–27 threads the bilayer; it reads ATALATIATVCWCVQLIPQII. Residues 28–36 are Extracellular-facing; sequence YNWKKKDCT. The chain crosses the membrane as a helical span at residues 37–57; sequence GLPPLMMFLWVVSGIPFAIYF. Residues 58-61 are Cytoplasmic-facing; that stretch reads CVSK. A helical transmembrane segment spans residues 62–82; sequence GNVILQVQPHLFMFFCSISFV. Over 83–96 the chain is Extracellular; sequence QSCYYPPISMARSK. Residues 97–117 form a helical membrane-spanning segment; sequence IVMIVAAIIAADVGMEVGFIL. The Cytoplasmic portion of the chain corresponds to 118–131; the sequence is WLRPLYEKGVKWPD. The chain crosses the membrane as a helical span at residues 132–152; the sequence is LIFGISASVLLAVGLLPPYFE. The region spanning 138–194 is the PQ-loop 2 domain; sequence ASVLLAVGLLPPYFELAKRKGRVIGINFAFLFIDSLGAWLSIISVILGNMDIMGIIL. Over 153–164 the chain is Extracellular; it reads LAKRKGRVIGIN. Residues 165 to 185 form a helical membrane-spanning segment; that stretch reads FAFLFIDSLGAWLSIISVILG. Over 186 to 191 the chain is Cytoplasmic; that stretch reads NMDIMG. Residues 192–212 traverse the membrane as a helical segment; it reads IILYSIVAGMELGIFASHFIW. Over 213-310 the chain is Extracellular; that stretch reads WCRFRFLAKG…DPDRYSRLSV (98 aa). Ser-229 is modified (phosphoserine). Asn-251 and Asn-259 each carry an N-linked (GlcNAc...) asparagine glycan.

The protein resides in the cell membrane. This is an uncharacterized protein from Saccharomyces cerevisiae (strain ATCC 204508 / S288c) (Baker's yeast).